We begin with the raw amino-acid sequence, 302 residues long: Pantothenate synthetase (302 aa).

ATP is bound at residue 47–54; the sequence is MGALHEGH. Catalysis depends on H54, which acts as the Proton donor. Residue Q79 participates in (R)-pantoate binding. Q79 is a beta-alanine binding site. Residue 165–168 coordinates ATP; it reads GEKD. Q171 serves as a coordination point for (R)-pantoate. Residues V194 and 202–205 contribute to the ATP site; that span reads LSSR.

It belongs to the pantothenate synthetase family. Homodimer.

It localises to the cytoplasm. The enzyme catalyses (R)-pantoate + beta-alanine + ATP = (R)-pantothenate + AMP + diphosphate + H(+). The protein operates within cofactor biosynthesis; (R)-pantothenate biosynthesis; (R)-pantothenate from (R)-pantoate and beta-alanine: step 1/1. In terms of biological role, catalyzes the condensation of pantoate with beta-alanine in an ATP-dependent reaction via a pantoyl-adenylate intermediate. This is Pantothenate synthetase from Saccharopolyspora erythraea (strain ATCC 11635 / DSM 40517 / JCM 4748 / NBRC 13426 / NCIMB 8594 / NRRL 2338).